Consider the following 220-residue polypeptide: Adenylate kinase (220 aa).

10–15 (GAGKGT) is an ATP binding site. The NMP stretch occupies residues 30-59 (STGDMLRAAVKAGTPLGVEAKGYMDAGKLV). Residues threonine 31, arginine 36, 57–59 (KLV), 85–88 (GFPR), and glutamine 92 each bind AMP. Residues 122 to 159 (GRRTHPASGRTYHVKFNPPKVEGHDDVTGEPLIQRDDD) form an LID region. Residues arginine 123 and 132-133 (TY) contribute to the ATP site. Positions 156 and 167 each coordinate AMP. An ATP-binding site is contributed by glycine 206.

The protein belongs to the adenylate kinase family. As to quaternary structure, monomer.

The protein localises to the cytoplasm. It carries out the reaction AMP + ATP = 2 ADP. Its pathway is purine metabolism; AMP biosynthesis via salvage pathway; AMP from ADP: step 1/1. Catalyzes the reversible transfer of the terminal phosphate group between ATP and AMP. Plays an important role in cellular energy homeostasis and in adenine nucleotide metabolism. This Burkholderia cenocepacia (strain HI2424) protein is Adenylate kinase.